The following is a 92-amino-acid chain: Cytochrome c2 (92 aa).

Positions 12, 15, 16, and 66 each coordinate heme c.

This sequence belongs to the cytochrome c family. Binds 1 heme c group covalently per subunit.

In terms of biological role, cytochrome c2 is found mainly in purple, non-sulfur, photosynthetic bacteria where it functions as the electron donor to the oxidized bacteriochlorophyll in the photophosphorylation pathway. However, it may also have a role in the respiratory chain and is found in some non-photosynthetic bacteria. In Rhodocyclus tenuis (Rhodospirillum tenue), this protein is Cytochrome c2.